Reading from the N-terminus, the 194-residue chain is Probable thymidylate kinase (194 aa).

An ATP-binding site is contributed by 8–15 (GIDGSGKT).

It belongs to the thymidylate kinase family.

It carries out the reaction dTMP + ATP = dTDP + ADP. The protein is Probable thymidylate kinase of Sulfolobus acidocaldarius (strain ATCC 33909 / DSM 639 / JCM 8929 / NBRC 15157 / NCIMB 11770).